Consider the following 386-residue polypeptide: Cell division protein FtsZ (386 aa).

Residues 18–22 (GGGVN), 105–107 (GTG), Glu136, Arg140, and Asp184 contribute to the GTP site.

This sequence belongs to the FtsZ family. As to quaternary structure, homodimer. Polymerizes to form a dynamic ring structure in a strictly GTP-dependent manner. Interacts directly with several other division proteins.

It is found in the cytoplasm. Essential cell division protein that forms a contractile ring structure (Z ring) at the future cell division site. The regulation of the ring assembly controls the timing and the location of cell division. One of the functions of the FtsZ ring is to recruit other cell division proteins to the septum to produce a new cell wall between the dividing cells. Binds GTP and shows GTPase activity. In Mycobacterium kansasii, this protein is Cell division protein FtsZ.